The chain runs to 431 residues: COBRA-like protein 4 (431 aa).

Positions M1–A20 are cleaved as a signal peptide. N-linked (GlcNAc...) asparagine glycosylation is found at N29, N154, N162, N201, N226, N306, N321, and N340. N414 carries the GPI-anchor amidated asparagine lipid modification. The propeptide at F415 to W431 is removed in mature form.

It belongs to the COBRA family. As to expression, expressed in roots, stems, leaves, flowers and siliques.

Its subcellular location is the cell membrane. The sequence is that of COBRA-like protein 4 (COBL4) from Arabidopsis thaliana (Mouse-ear cress).